The sequence spans 523 residues: Ribosomal protein uS12 methylthiotransferase RimO (523 aa).

Residues 7–134 (RRVALITLGC…IATHLAAVLA (128 aa)) enclose the MTTase N-terminal domain. Residues Cys-16, Cys-52, Cys-97, Cys-192, Cys-196, and Cys-199 each contribute to the [4Fe-4S] cluster site. A Radical SAM core domain is found at 178–409 (LTAGPVAVLK…DLVEQLTAAR (232 aa)). One can recognise a TRAM domain in the interval 411 to 492 (DARIGSRVQV…GVDLIAEFIA (82 aa)).

Belongs to the methylthiotransferase family. RimO subfamily. The cofactor is [4Fe-4S] cluster.

It is found in the cytoplasm. It carries out the reaction L-aspartate(89)-[ribosomal protein uS12]-hydrogen + (sulfur carrier)-SH + AH2 + 2 S-adenosyl-L-methionine = 3-methylsulfanyl-L-aspartate(89)-[ribosomal protein uS12]-hydrogen + (sulfur carrier)-H + 5'-deoxyadenosine + L-methionine + A + S-adenosyl-L-homocysteine + 2 H(+). In terms of biological role, catalyzes the methylthiolation of an aspartic acid residue of ribosomal protein uS12. The sequence is that of Ribosomal protein uS12 methylthiotransferase RimO from Frankia casuarinae (strain DSM 45818 / CECT 9043 / HFP020203 / CcI3).